Reading from the N-terminus, the 150-residue chain is Leukotriene C4 synthase (150 aa).

The Cytoplasmic segment spans residues 1 to 6 (MKEETA). A helical transmembrane segment spans residues 7-27 (LLATVTLLGVLLQAYFSLQVI). At 28 to 48 (SARRTFHVSPPLTSGPPEFER) the chain is on the lumenal side. Arg30 serves as a coordination point for glutathione. Catalysis depends on Arg31, which acts as the Proton donor. Phosphoserine is present on Ser36. The chain crosses the membrane as a helical span at residues 49–69 (VFRAQVNCSEYFPLFLATLWV). Glutathione-binding positions include 51-55 (RAQVN) and 58-59 (EY). The Cytoplasmic segment spans residues 70-73 (AGIF). A helical transmembrane segment spans residues 74-94 (FHEGAAALCGLFYLFARLRYF). A glutathione-binding site is contributed by 93 to 97 (YFQGY). At 95–104 (QGYARSAQHR) the chain is on the lumenal side. Residue Arg104 is the Proton acceptor of the active site. Residues 105-124 (LDPLYASARALWLLVAMAAL) traverse the membrane as a helical segment. Topologically, residues 125–150 (GLLVHFLPGTLRAALFRWLQVLLPMA) are cytoplasmic.

This sequence belongs to the MAPEG family. As to quaternary structure, homotrimer. Interacts with ALOX5AP and ALOX5. Phosphorylation at Ser-36 by RPS6KB1 inhibits the leukotriene-C4 synthase activity.

It localises to the nucleus outer membrane. The protein resides in the endoplasmic reticulum membrane. It is found in the nucleus membrane. The enzyme catalyses leukotriene C4 = leukotriene A4 + glutathione. It catalyses the reaction (13S,14S)-epoxy-(4Z,7Z,9E,11E,16Z,19Z)-docosahexaenoate + glutathione = (13R)-S-glutathionyl-(14S)-hydroxy-(4Z,7Z,9E,11E,16Z,19Z)-docosahexaenoate. It participates in lipid metabolism; leukotriene C4 biosynthesis. With respect to regulation, inhibited by MK886. Catalyzes the conjugation of leukotriene A4 with reduced glutathione (GSH) to form leukotriene C4 with high specificity. Can also catalyze the transfer of a glutathionyl group from glutathione (GSH) to 13(S),14(S)-epoxy-docosahexaenoic acid to form maresin conjugate in tissue regeneration 1 (MCTR1), a bioactive lipid mediator that possess potent anti-inflammatory and proresolving actions. The chain is Leukotriene C4 synthase (Ltc4s) from Rattus norvegicus (Rat).